A 1994-amino-acid chain; its full sequence is Protein-methionine sulfoxide oxidase mical3a (1994 aa).

The monooxygenase domain stretch occupies residues 2-498; it reads GDGGVNAVGE…RHLLDTGETR (497 aa). Residues C101, 101–129, E120, R122, R127, N129, and D402 each bind FAD; that span reads CGLRTAIELGFLGAKVVLLEKRDAFSRNN. In terms of domain architecture, Calponin-homology (CH) spans 521–627; that stretch reads IVRSSKLLNW…YLSQFYEMFK (107 aa). Residues 666-708 are disordered; it reads ISRKRNPKDKKEKELDGLGKRRKTSQAGQSEDEELQRANRDDR. Basic and acidic residues predominate over residues 674–684; it reads DKKEKELDGLG. In terms of domain architecture, LIM zinc-binding spans 772–834; it reads DVCFFCRKRV…KPHYCYRLSG (63 aa). Disordered regions lie at residues 843-900, 917-1064, 1176-1263, 1281-1476, 1493-1555, and 1598-1747; these read PAAA…LKGT, EELE…AEAR, SQPV…ELKK, LGLT…REEV, VEDT…SPEA, and KVAW…LRLR. 2 stretches are compositionally biased toward acidic residues: residues 917 to 926 and 951 to 961; these read EELEEVPEET and SDMEEEDEDAE. Residues 975 to 987 are compositionally biased toward basic and acidic residues; that stretch reads EAVELHAKLKGES. Acidic residues-rich tracts occupy residues 1001–1037 and 1046–1060; these read GEMDEDEEEEEDEEDEDEEEEEESSEEPCEEDDDPEA and PGTEIDQEDIPSDAE. Polar residues predominate over residues 1200-1215; the sequence is PTGNPLSPICTQSQPC. Basic and acidic residues-rich tracts occupy residues 1249–1263 and 1287–1297; these read RTNEHLKDSTPELKK and ERSKTAVEKSI. Low complexity-rich tracts occupy residues 1299-1314 and 1358-1368; these read KTPTPESSSPKSYTPE and SSSSGLGLNGS. A compositionally biased stretch (polar residues) spans 1369-1389; it reads VTTSQTAASDSYNNSDSTMLT. Residues 1437 to 1458 show a composition bias toward pro residues; sequence PVSPPQPKQKPVTAPVPTPRTN. Positions 1464–1476 are enriched in basic and acidic residues; the sequence is RVKEPNKPRREEV. Positions 1616-1635 are enriched in basic and acidic residues; sequence AQKDSAVKALESKKQADTLP. Positions 1649–1660 are enriched in low complexity; that stretch reads SSVTSSESSTGG. Positions 1661 to 1679 are enriched in basic residues; the sequence is KSKKRSSLFSPRKNKKEKK. A compositionally biased stretch (basic and acidic residues) spans 1680–1693; sequence AKNERLSSTEETPP. Residues 1718–1729 are compositionally biased toward low complexity; that stretch reads CPSTPSSSTTGD. Basic and acidic residues predominate over residues 1730–1746; that stretch reads SGKKKDSPLDRSSDLRL. 2 coiled-coil regions span residues 1796–1855 and 1894–1960; these read EEEL…KALR and QEKN…EQRD. The bMERB domain occupies 1816–1982; the sequence is KQEELKRLHR…EKEEDKDLEA (167 aa).

The protein belongs to the Mical family. It depends on FAD as a cofactor.

The protein localises to the cytoplasm. Its subcellular location is the cytoskeleton. It is found in the nucleus. The enzyme catalyses L-methionyl-[F-actin] + NADPH + O2 + H(+) = L-methionyl-(R)-S-oxide-[F-actin] + NADP(+) + H2O. Its function is as follows. Monooxygenase that promotes depolymerization of F-actin by mediating oxidation of specific methionine residues on actin. Acts by modifying actin subunits through the addition of oxygen to form methionine-sulfoxide, leading to promote actin filament severing and prevent repolymerization. Involved in exocytic vesicles tethering and fusion: the monooxygenase activity is required for this process. This is Protein-methionine sulfoxide oxidase mical3a (mical3a) from Danio rerio (Zebrafish).